The chain runs to 891 residues: DNA mismatch repair protein MutS (891 aa).

639–646 provides a ligand contact to ATP; the sequence is GPNMAGKS. The segment at 827–854 is disordered; it reads TIQEARPSAQGSEEKTPSSPAEKGLSLF.

It belongs to the DNA mismatch repair MutS family.

Its function is as follows. This protein is involved in the repair of mismatches in DNA. It is possible that it carries out the mismatch recognition step. This protein has a weak ATPase activity. In Treponema denticola (strain ATCC 35405 / DSM 14222 / CIP 103919 / JCM 8153 / KCTC 15104), this protein is DNA mismatch repair protein MutS.